The primary structure comprises 132 residues: Large ribosomal subunit protein uL24 (132 aa).

Belongs to the universal ribosomal protein uL24 family. Part of the 50S ribosomal subunit.

Its function is as follows. One of two assembly initiator proteins, it binds directly to the 5'-end of the 23S rRNA, where it nucleates assembly of the 50S subunit. One of the proteins that surrounds the polypeptide exit tunnel on the outside of the subunit. The protein is Large ribosomal subunit protein uL24 of Aquifex aeolicus (strain VF5).